The sequence spans 81 residues: Escargot/snail protein homolog (81 aa).

4 C2H2-type zinc fingers span residues 1–5 (HQQFH), 17–39 (FSCKYCEKVYVSLGALKMHIRTH), 43–65 (CKCHLCGKAFSRPWLLQGHIRTH), and 71–81 (FSCQHCNRAFA).

Belongs to the snail C2H2-type zinc-finger protein family.

The protein localises to the nucleus. This is Escargot/snail protein homolog from Apis mellifera (Honeybee).